The primary structure comprises 124 residues: Large ribosomal subunit protein uL29 (124 aa).

This sequence belongs to the universal ribosomal protein uL29 family.

The protein is Large ribosomal subunit protein uL29 (RPL35) of Triticum aestivum (Wheat).